The sequence spans 171 residues: Shikimate kinase (171 aa).

14–19 (GAGKST) is a binding site for ATP. Serine 18 provides a ligand contact to Mg(2+). Substrate contacts are provided by aspartate 36, arginine 60, and glycine 82. Arginine 120 contacts ATP. Arginine 139 lines the substrate pocket. Glutamine 156 is an ATP binding site.

This sequence belongs to the shikimate kinase family. In terms of assembly, monomer. It depends on Mg(2+) as a cofactor.

Its subcellular location is the cytoplasm. It catalyses the reaction shikimate + ATP = 3-phosphoshikimate + ADP + H(+). The protein operates within metabolic intermediate biosynthesis; chorismate biosynthesis; chorismate from D-erythrose 4-phosphate and phosphoenolpyruvate: step 5/7. Its function is as follows. Catalyzes the specific phosphorylation of the 3-hydroxyl group of shikimic acid using ATP as a cosubstrate. This chain is Shikimate kinase, found in Shewanella sediminis (strain HAW-EB3).